The chain runs to 206 residues: Charged multivesicular body protein 6 (206 aa).

G2 carries the N-myristoyl glycine lipid modification. Residues 11–103 (TRVTEQDRAV…AQIEMKVIEG (93 aa)) adopt a coiled-coil conformation. Residues 167-206 (EADLELPEVPGEELPEVPEQEPVREKERVKKKPEREMVAV) form a disordered region. Residues 168–185 (ADLELPEVPGEELPEVPE) are compositionally biased toward acidic residues. The Type-2 MIT-interacting motif motif lies at 170 to 181 (LELPEVPGEELP). Residues 187-206 (EPVREKERVKKKPEREMVAV) are compositionally biased toward basic and acidic residues.

This sequence belongs to the SNF7 family. As to quaternary structure, probable core component of the endosomal sorting required for transport complex III (ESCRT-III). ESCRT-III components are thought to multimerize to form a flat lattice on the perimeter membrane of the endosome.

It is found in the endomembrane system. The protein localises to the late endosome membrane. Probable core component of the endosomal sorting required for transport complex III (ESCRT-III) which is involved in multivesicular bodies (MVBs) formation and sorting of endosomal cargo proteins into MVBs. MVBs contain intraluminal vesicles (ILVs) that are generated by invagination and scission from the limiting membrane of the endosome and mostly are delivered to lysosomes enabling degradation of membrane proteins, such as stimulated growth factor receptors, lysosomal enzymes and lipids. In the ESCRT-III complex, it probably serves as an acceptor for the ESCRT-II complex on endosomal membranes. The sequence is that of Charged multivesicular body protein 6 (chmp6) from Danio rerio (Zebrafish).